Here is a 691-residue protein sequence, read N- to C-terminus: DNA ligase (691 aa).

NAD(+)-binding positions include aspartate 41 to aspartate 45, serine 90 to leucine 91, and glutamate 130. The active-site N6-AMP-lysine intermediate is the lysine 132. Arginine 153, glutamate 190, lysine 307, and lysine 331 together coordinate NAD(+). Zn(2+) contacts are provided by cysteine 425, cysteine 428, cysteine 443, and cysteine 449. Positions alanine 610–proline 691 constitute a BRCT domain.

This sequence belongs to the NAD-dependent DNA ligase family. LigA subfamily. The cofactor is Mg(2+). Requires Mn(2+) as cofactor.

The catalysed reaction is NAD(+) + (deoxyribonucleotide)n-3'-hydroxyl + 5'-phospho-(deoxyribonucleotide)m = (deoxyribonucleotide)n+m + AMP + beta-nicotinamide D-nucleotide.. In terms of biological role, DNA ligase that catalyzes the formation of phosphodiester linkages between 5'-phosphoryl and 3'-hydroxyl groups in double-stranded DNA using NAD as a coenzyme and as the energy source for the reaction. It is essential for DNA replication and repair of damaged DNA. This chain is DNA ligase, found in Burkholderia ambifaria (strain ATCC BAA-244 / DSM 16087 / CCUG 44356 / LMG 19182 / AMMD) (Burkholderia cepacia (strain AMMD)).